We begin with the raw amino-acid sequence, 505 residues long: 2,3-bisphosphoglycerate-independent phosphoglycerate mutase (505 aa).

Residues D13 and S63 each contribute to the Mn(2+) site. The active-site Phosphoserine intermediate is the S63. Substrate contacts are provided by residues H124, 153 to 154 (RD), R183, R189, 254 to 257 (RADR), and K330. Residues D396, H400, D437, H438, and H456 each contribute to the Mn(2+) site.

Belongs to the BPG-independent phosphoglycerate mutase family. In terms of assembly, monomer. Mn(2+) is required as a cofactor.

The enzyme catalyses (2R)-2-phosphoglycerate = (2R)-3-phosphoglycerate. Its pathway is carbohydrate degradation; glycolysis; pyruvate from D-glyceraldehyde 3-phosphate: step 3/5. Catalyzes the interconversion of 2-phosphoglycerate and 3-phosphoglycerate. The chain is 2,3-bisphosphoglycerate-independent phosphoglycerate mutase from Roseobacter denitrificans (strain ATCC 33942 / OCh 114) (Erythrobacter sp. (strain OCh 114)).